Consider the following 349-residue polypeptide: Green-sensitive opsin-1 (349 aa).

The Extracellular portion of the chain corresponds to 1–36; that stretch reads MNGTEGSNFYIPMSNRTGLVRSPYDYTQYYLAEPWK. N-linked (GlcNAc...) asparagine glycans are attached at residues Asn-2 and Asn-15. Residues 37–61 traverse the membrane as a helical segment; sequence FKALAFYMFLLIIFGFPINVLTLVV. Residues 62–73 lie on the Cytoplasmic side of the membrane; sequence TAQHKKLRQPLN. A helical membrane pass occupies residues 74 to 99; the sequence is YILVNLAFAGTIMVIFGFTVSFYCSL. At 100 to 113 the chain is on the extracellular side; it reads VGYMALGPLGCVME. A disulfide bond links Cys-110 and Cys-187. The chain crosses the membrane as a helical span at residues 114–133; the sequence is GFFATLGGQVALWSLVVLAI. Residues 134–152 lie on the Cytoplasmic side of the membrane; it reads ERYIVVCKPMGSFKFSANH. A helical transmembrane segment spans residues 153-176; that stretch reads AMAGIAFTWFMACSCAVPPLFGWS. Topologically, residues 177–202 are extracellular; the sequence is RYLPEGMQTSCGPDYYTLNPEYNNES. Asn-200 carries N-linked (GlcNAc...) asparagine glycosylation. A helical membrane pass occupies residues 203 to 230; that stretch reads YVMYMFSCHFCIPVTTIFFTYGSLVCTV. The Cytoplasmic segment spans residues 231–252; it reads KAAAAQQQESESTQKAEREVTR. Residues 253 to 276 traverse the membrane as a helical segment; it reads MVILMVLGFLFAWVPYASFAAWIF. The Extracellular segment spans residues 277–284; sequence FNRGAAFS. The helical transmembrane segment at 285 to 309 threads the bilayer; the sequence is AQAMAVPAFFSKTSAVFNPIIYVLL. N6-(retinylidene)lysine is present on Lys-296. At 310–349 the chain is on the cytoplasmic side; that stretch reads NKQFRSCMLNTLFCGKSPLGDDESSSVSTSKTEVSSVSPA. The tract at residues 328–349 is disordered; that stretch reads LGDDESSSVSTSKTEVSSVSPA. Residues 334 to 349 show a composition bias toward low complexity; it reads SSVSTSKTEVSSVSPA.

It belongs to the G-protein coupled receptor 1 family. Opsin subfamily. Post-translationally, phosphorylated on some or all of the serine and threonine residues present in the C-terminal region. Retinal double cone accessory photoreceptor cell outer segments.

It localises to the membrane. Visual pigments are the light-absorbing molecules that mediate vision. They consist of an apoprotein, opsin, covalently linked to cis-retinal. The sequence is that of Green-sensitive opsin-1 (opn1mw1) from Danio rerio (Zebrafish).